Reading from the N-terminus, the 268-residue chain is Glutamate racemase (268 aa).

Residues 9–10 and 41–42 each bind substrate; these read DS and YG. Cys-73 (proton donor/acceptor) is an active-site residue. 74 to 75 serves as a coordination point for substrate; sequence NS. Cys-183 serves as the catalytic Proton donor/acceptor. A substrate-binding site is contributed by 184–185; sequence TH.

This sequence belongs to the aspartate/glutamate racemases family.

It catalyses the reaction L-glutamate = D-glutamate. It participates in cell wall biogenesis; peptidoglycan biosynthesis. Provides the (R)-glutamate required for cell wall biosynthesis. The polypeptide is Glutamate racemase (Shewanella piezotolerans (strain WP3 / JCM 13877)).